The primary structure comprises 428 residues: Serine--tRNA ligase (428 aa).

Position 231-233 (Thr-231–Glu-233) interacts with L-serine. ATP-binding positions include Arg-262 to Glu-264 and Val-278. Glu-285 contacts L-serine. Residue Glu-349–Ser-352 participates in ATP binding. Residue Thr-384 coordinates L-serine.

This sequence belongs to the class-II aminoacyl-tRNA synthetase family. Type-1 seryl-tRNA synthetase subfamily. As to quaternary structure, homodimer. The tRNA molecule binds across the dimer.

Its subcellular location is the cytoplasm. It catalyses the reaction tRNA(Ser) + L-serine + ATP = L-seryl-tRNA(Ser) + AMP + diphosphate + H(+). The enzyme catalyses tRNA(Sec) + L-serine + ATP = L-seryl-tRNA(Sec) + AMP + diphosphate + H(+). The protein operates within aminoacyl-tRNA biosynthesis; selenocysteinyl-tRNA(Sec) biosynthesis; L-seryl-tRNA(Sec) from L-serine and tRNA(Sec): step 1/1. Functionally, catalyzes the attachment of serine to tRNA(Ser). Is also able to aminoacylate tRNA(Sec) with serine, to form the misacylated tRNA L-seryl-tRNA(Sec), which will be further converted into selenocysteinyl-tRNA(Sec). The sequence is that of Serine--tRNA ligase from Bifidobacterium longum subsp. infantis (strain ATCC 15697 / DSM 20088 / JCM 1222 / NCTC 11817 / S12).